Here is a 405-residue protein sequence, read N- to C-terminus: BRCA1-A complex subunit Abraxas 1 (405 aa).

The 147-residue stretch at 7–153 (SALLSGFVFG…CSTYRLEHAL (147 aa)) folds into the MPN domain. Positions 208 to 262 (SLQEVHKINEMYATLQEELKKMCSDVEVSERSVEKLLTEVSQLKEEINRKKQHKI) form a coiled coil. Positions 365–405 (LHQDEEDCNQETKLALSSAETDEEALENPKDTNEYSYSPTF) are disordered. Ser-402 carries the phosphoserine modification. The pSXXF motif motif lies at 402–405 (SPTF).

This sequence belongs to the FAM175 family. Abraxas subfamily. In terms of assembly, component of the BRCA1-A complex. Component of the BRISC complex. Homodimer. Interacts directly (when phosphorylated at Ser-402) with BRCA1. The phosphorylated homodimer can interact directly with two BRCA1 chains, giving rise to a heterotetramer. Phosphorylation of Ser-402 of the pSXXF motif by ATM or ATR constitutes a specific recognition motif for the BRCT domain of BRCA1.

The protein resides in the nucleus. Its function is as follows. Involved in DNA damage response and double-strand break (DSB) repair. Component of the BRCA1-A complex, acting as a central scaffold protein that assembles the various components of the complex and mediates the recruitment of BRCA1. The BRCA1-A complex specifically recognizes 'Lys-63'-linked ubiquitinated histones H2A and H2AX at DNA lesion sites, leading to target the BRCA1-BARD1 heterodimer to sites of DNA damage at DSBs. This complex also possesses deubiquitinase activity that specifically removes 'Lys-63'-linked ubiquitin on histones H2A and H2AX. This Gallus gallus (Chicken) protein is BRCA1-A complex subunit Abraxas 1.